Here is a 366-residue protein sequence, read N- to C-terminus: UDP-N-acetylglucosamine--N-acetylmuramyl-(pentapeptide) pyrophosphoryl-undecaprenol N-acetylglucosamine transferase (366 aa).

UDP-N-acetyl-alpha-D-glucosamine contacts are provided by residues 14–16, N125, R168, S196, and Q297; that span reads TGG.

The protein belongs to the glycosyltransferase 28 family. MurG subfamily.

The protein localises to the cell inner membrane. It catalyses the reaction di-trans,octa-cis-undecaprenyl diphospho-N-acetyl-alpha-D-muramoyl-L-alanyl-D-glutamyl-meso-2,6-diaminopimeloyl-D-alanyl-D-alanine + UDP-N-acetyl-alpha-D-glucosamine = di-trans,octa-cis-undecaprenyl diphospho-[N-acetyl-alpha-D-glucosaminyl-(1-&gt;4)]-N-acetyl-alpha-D-muramoyl-L-alanyl-D-glutamyl-meso-2,6-diaminopimeloyl-D-alanyl-D-alanine + UDP + H(+). Its pathway is cell wall biogenesis; peptidoglycan biosynthesis. Functionally, cell wall formation. Catalyzes the transfer of a GlcNAc subunit on undecaprenyl-pyrophosphoryl-MurNAc-pentapeptide (lipid intermediate I) to form undecaprenyl-pyrophosphoryl-MurNAc-(pentapeptide)GlcNAc (lipid intermediate II). This chain is UDP-N-acetylglucosamine--N-acetylmuramyl-(pentapeptide) pyrophosphoryl-undecaprenol N-acetylglucosamine transferase, found in Rhodopseudomonas palustris (strain ATCC BAA-98 / CGA009).